The sequence spans 557 residues: Urocanate hydratase (557 aa).

The interval 1–20 is disordered; it reads MSNPRHNEREVRSPRGDELN. NAD(+)-binding positions include 52–53, Gln-130, 176–178, Glu-196, Arg-201, 242–243, 263–267, 273–274, and Tyr-322; these read GG, GMG, NA, QTSAH, and YL. Cys-410 is an active-site residue. Gly-492 serves as a coordination point for NAD(+).

This sequence belongs to the urocanase family. NAD(+) serves as cofactor.

Its subcellular location is the cytoplasm. The enzyme catalyses 4-imidazolone-5-propanoate = trans-urocanate + H2O. It functions in the pathway amino-acid degradation; L-histidine degradation into L-glutamate; N-formimidoyl-L-glutamate from L-histidine: step 2/3. Catalyzes the conversion of urocanate to 4-imidazolone-5-propionate. This is Urocanate hydratase from Brucella abortus (strain S19).